The following is a 463-amino-acid chain: Vicilin (463 aa).

A signal peptide spans 1–27 (MAATTLKDSFPLLTLLGIAFLASVCLS). The Cupin type-1 1 domain occupies 35-194 (PFVFESNRFQ…SFNTDYKEIE (160 aa)). The disordered stretch occupies residues 235 to 257 (LNKNAKSSSKKSTSSESEPFNLR). Residues 238–252 (NAKSSSKKSTSSESE) show a composition bias toward low complexity. The Cupin type-1 2 domain maps to 254-426 (FNLRSREPIY…AFPGSAQEVD (173 aa)).

This sequence belongs to the 7S seed storage protein family.

It is found in the vacuole. It localises to the aleurone grain. Functionally, seed storage protein. This Vicia faba (Broad bean) protein is Vicilin.